The sequence spans 600 residues: Adenine deaminase 3 (600 aa).

Belongs to the metallo-dependent hydrolases superfamily. Adenine deaminase family. Mn(2+) serves as cofactor.

The catalysed reaction is adenine + H2O + H(+) = hypoxanthine + NH4(+). This chain is Adenine deaminase 3, found in Rhizobium johnstonii (strain DSM 114642 / LMG 32736 / 3841) (Rhizobium leguminosarum bv. viciae).